The following is a 422-amino-acid chain: NADH-quinone oxidoreductase subunit D 1 (422 aa).

This sequence belongs to the complex I 49 kDa subunit family. In terms of assembly, NDH-1 is composed of 14 different subunits. Subunits NuoB, C, D, E, F, and G constitute the peripheral sector of the complex.

The protein resides in the cell membrane. It catalyses the reaction a quinone + NADH + 5 H(+)(in) = a quinol + NAD(+) + 4 H(+)(out). NDH-1 shuttles electrons from NADH, via FMN and iron-sulfur (Fe-S) centers, to quinones in the respiratory chain. The immediate electron acceptor for the enzyme in this species is believed to be ubiquinone. Couples the redox reaction to proton translocation (for every two electrons transferred, four hydrogen ions are translocated across the cytoplasmic membrane), and thus conserves the redox energy in a proton gradient. This chain is NADH-quinone oxidoreductase subunit D 1, found in Herpetosiphon aurantiacus (strain ATCC 23779 / DSM 785 / 114-95).